A 266-amino-acid chain; its full sequence is METLKSNKARLEYLINDMRRERNDNDVLVMPSSFEDLWELYRGLANVRPALPVSDEYLAVQDAMLSDLNHQHVTDLKDLKPIKGDNIFVWQGDITTLKIDAIVNAANSRFLGCMQANHDCIDNIIHTKAGVQVRLDCAEIIRQQGRNEGVGKAKKTRGYNLPAKYIIHTVGPQIRRLPVSKMNQDLLAKCYLSCLKLADQHSLNHVAFCCISTGVFAFPQDEAAEIAVRTVESYLKETNSTLKVVFNVFTDKDLQLYKEALNRDAE.

The Macro domain occupies 74 to 265 (TDLKDLKPIK…LYKEALNRDA (192 aa)). Positions 93, 94, and 107 each coordinate ADP-D-ribose. Residues cysteine 113, histidine 118, and cysteine 120 each coordinate Zn(2+). ADP-D-ribose-binding residues include cysteine 120, isoleucine 121, aspartate 122, serine 212, threonine 213, glycine 214, and phenylalanine 216.

It belongs to the MacroD-type family. Zn-Macro subfamily. As to quaternary structure, monomer. Directly interacts with the lipoylated form of GcvH-L. Requires Zn(2+) as cofactor.

The catalysed reaction is 4-O-(ADP-D-ribosyl)-L-aspartyl-[protein] + H2O = L-aspartyl-[protein] + ADP-D-ribose + H(+). In terms of biological role, ADP-ribosylhydrolase that specifically reverses the SirTM-mediated mono-ADP-ribosylation at an asparatate residue of GcvH-L (SAV0324), by releasing ADP-ribose from the target protein. May play a role in the regulation of the response to host-induced oxidative stress. The protein is Protein-ADP-ribose hydrolase of Staphylococcus aureus (strain Mu50 / ATCC 700699).